The sequence spans 182 residues: Small ribosomal subunit protein uS4c (182 aa).

Positions M82–N143 constitute an S4 RNA-binding domain.

The protein belongs to the universal ribosomal protein uS4 family. In terms of assembly, part of the 30S ribosomal subunit. Contacts protein S5. The interaction surface between S4 and S5 is involved in control of translational fidelity.

The protein localises to the plastid. Its subcellular location is the chloroplast. Its function is as follows. One of the primary rRNA binding proteins, it binds directly to 16S rRNA where it nucleates assembly of the body of the 30S subunit. With S5 and S12 plays an important role in translational accuracy. The sequence is that of Small ribosomal subunit protein uS4c (rps4) from Tigridia sp. (strain Lejeune 1997).